The primary structure comprises 259 residues: UPF0246 protein PSPTO_1244 (259 aa).

Belongs to the UPF0246 family.

This Pseudomonas syringae pv. tomato (strain ATCC BAA-871 / DC3000) protein is UPF0246 protein PSPTO_1244.